Here is a 124-residue protein sequence, read N- to C-terminus: Large ribosomal subunit protein eL22 (124 aa).

It belongs to the eukaryotic ribosomal protein eL22 family. Component of the large ribosomal subunit. Mature ribosomes consist of a small (40S) and a large (60S) subunit. The 40S subunit contains about 32 different proteins and 1 molecule of RNA (18S). The 60S subunit contains 45 different proteins and 3 molecules of RNA (25S, 5.8S and 5S).

It is found in the cytoplasm. In terms of biological role, component of the ribosome, a large ribonucleoprotein complex responsible for the synthesis of proteins in the cell. The small ribosomal subunit (SSU) binds messenger RNAs (mRNAs) and translates the encoded message by selecting cognate aminoacyl-transfer RNA (tRNA) molecules. The large subunit (LSU) contains the ribosomal catalytic site termed the peptidyl transferase center (PTC), which catalyzes the formation of peptide bonds, thereby polymerizing the amino acids delivered by tRNAs into a polypeptide chain. The nascent polypeptides leave the ribosome through a tunnel in the LSU and interact with protein factors that function in enzymatic processing, targeting, and the membrane insertion of nascent chains at the exit of the ribosomal tunnel. In Candida albicans (strain SC5314 / ATCC MYA-2876) (Yeast), this protein is Large ribosomal subunit protein eL22.